An 873-amino-acid polypeptide reads, in one-letter code: Alanine--tRNA ligase (873 aa).

His557, His561, Cys659, and His663 together coordinate Zn(2+).

This sequence belongs to the class-II aminoacyl-tRNA synthetase family. Zn(2+) serves as cofactor.

The protein localises to the cytoplasm. The catalysed reaction is tRNA(Ala) + L-alanine + ATP = L-alanyl-tRNA(Ala) + AMP + diphosphate. Functionally, catalyzes the attachment of alanine to tRNA(Ala) in a two-step reaction: alanine is first activated by ATP to form Ala-AMP and then transferred to the acceptor end of tRNA(Ala). Also edits incorrectly charged Ser-tRNA(Ala) and Gly-tRNA(Ala) via its editing domain. This chain is Alanine--tRNA ligase, found in Nitrosococcus oceani (strain ATCC 19707 / BCRC 17464 / JCM 30415 / NCIMB 11848 / C-107).